Here is a 238-residue protein sequence, read N- to C-terminus: Probable transcriptional regulatory protein YeeN (238 aa).

It belongs to the TACO1 family. YeeN subfamily.

It localises to the cytoplasm. The chain is Probable transcriptional regulatory protein YeeN from Escherichia coli O157:H7.